The following is a 419-amino-acid chain: Arginine biosynthesis bifunctional protein ArgJ (419 aa).

The substrate site is built by Thr154, Lys180, Thr191, Glu277, Asn414, and Thr419. Catalysis depends on Thr191, which acts as the Nucleophile.

Belongs to the ArgJ family. Heterotetramer of two alpha and two beta chains.

Its subcellular location is the cytoplasm. The catalysed reaction is N(2)-acetyl-L-ornithine + L-glutamate = N-acetyl-L-glutamate + L-ornithine. It catalyses the reaction L-glutamate + acetyl-CoA = N-acetyl-L-glutamate + CoA + H(+). The protein operates within amino-acid biosynthesis; L-arginine biosynthesis; L-ornithine and N-acetyl-L-glutamate from L-glutamate and N(2)-acetyl-L-ornithine (cyclic): step 1/1. Its pathway is amino-acid biosynthesis; L-arginine biosynthesis; N(2)-acetyl-L-ornithine from L-glutamate: step 1/4. In terms of biological role, catalyzes two activities which are involved in the cyclic version of arginine biosynthesis: the synthesis of N-acetylglutamate from glutamate and acetyl-CoA as the acetyl donor, and of ornithine by transacetylation between N(2)-acetylornithine and glutamate. The sequence is that of Arginine biosynthesis bifunctional protein ArgJ from Thermosynechococcus vestitus (strain NIES-2133 / IAM M-273 / BP-1).